The sequence spans 150 residues: Protein Smg homolog (150 aa).

This sequence belongs to the Smg family.

In Methylobacillus flagellatus (strain ATCC 51484 / DSM 6875 / VKM B-1610 / KT), this protein is Protein Smg homolog.